We begin with the raw amino-acid sequence, 65 residues long: Large ribosomal subunit protein bL35 (65 aa).

A disordered region spans residues 1–20 (MPKMKTNSGSKKRFTLTGTG).

It belongs to the bacterial ribosomal protein bL35 family.

This is Large ribosomal subunit protein bL35 from Bacteroides thetaiotaomicron (strain ATCC 29148 / DSM 2079 / JCM 5827 / CCUG 10774 / NCTC 10582 / VPI-5482 / E50).